Consider the following 541-residue polypeptide: Chaperonin GroEL 1 (541 aa).

Residues 29–32, 86–90, glycine 413, 479–481, and aspartate 495 contribute to the ATP site; these read TLGP, DGTTT, and NAA.

It belongs to the chaperonin (HSP60) family. As to quaternary structure, forms a cylinder of 14 subunits composed of two heptameric rings stacked back-to-back. Interacts with the co-chaperonin GroES.

Its subcellular location is the cytoplasm. It carries out the reaction ATP + H2O + a folded polypeptide = ADP + phosphate + an unfolded polypeptide.. Together with its co-chaperonin GroES, plays an essential role in assisting protein folding. The GroEL-GroES system forms a nano-cage that allows encapsulation of the non-native substrate proteins and provides a physical environment optimized to promote and accelerate protein folding. The protein is Chaperonin GroEL 1 of Synechocystis sp. (strain ATCC 27184 / PCC 6803 / Kazusa).